The sequence spans 283 residues: NAD kinase (283 aa).

Asp-68 acts as the Proton acceptor in catalysis. NAD(+)-binding positions include 68–69, 142–143, Arg-153, Asp-172, 183–188, and Gln-242; these read DG, ND, and TAYSLS.

The protein belongs to the NAD kinase family. A divalent metal cation is required as a cofactor.

It localises to the cytoplasm. It carries out the reaction NAD(+) + ATP = ADP + NADP(+) + H(+). In terms of biological role, involved in the regulation of the intracellular balance of NAD and NADP, and is a key enzyme in the biosynthesis of NADP. Catalyzes specifically the phosphorylation on 2'-hydroxyl of the adenosine moiety of NAD to yield NADP. This Thermoanaerobacter pseudethanolicus (strain ATCC 33223 / 39E) (Clostridium thermohydrosulfuricum) protein is NAD kinase.